Here is a 542-residue protein sequence, read N- to C-terminus: Putative cysteine ligase BshC (542 aa).

Residues 458–487 (VAKNAAILQAQIEFLQHALERALLRKHETE) adopt a coiled-coil conformation.

Belongs to the BshC family.

Its function is as follows. Involved in bacillithiol (BSH) biosynthesis. May catalyze the last step of the pathway, the addition of cysteine to glucosamine malate (GlcN-Mal) to generate BSH. This Geobacillus kaustophilus (strain HTA426) protein is Putative cysteine ligase BshC.